The primary structure comprises 488 residues: Protein unzipped (488 aa).

The first 21 residues, 1 to 21 (MTSNSCLISLGLLLVLIQILA), serve as a signal peptide directing secretion. The Extracellular segment spans residues 22 to 465 (PAKAAEHSVF…DVALAGFGVN (444 aa)). N-linked (GlcNAc...) asparagine glycans are attached at residues Asn-35, Asn-232, Asn-317, and Asn-374. A compositionally biased stretch (low complexity) spans 380 to 400 (TTTTTTTTSTSTTTHATTTST). The segment at 380–453 (TTTTTTTTST…EAPENMSSDP (74 aa)) is disordered. The N-linked (GlcNAc...) asparagine glycan is linked to Asn-448. The helical transmembrane segment at 466 to 486 (AAGSTFIAGSALLTLLLTIFL) threads the bilayer. Residues 487–488 (SL) lie on the Cytoplasmic side of the membrane.

Its subcellular location is the membrane. Its function is as follows. Required for normal axon patterning during neurogenesis. In Drosophila melanogaster (Fruit fly), this protein is Protein unzipped (uzip).